The sequence spans 178 residues: Zinc finger CCHC domain-containing protein 10 (178 aa).

The segment at 21-38 (VRCQKCLEFGHWTYECKG) adopts a CCHC-type zinc-finger fold. Residues 66–178 (QSIGETNIEK…EPQKKKKKKK (113 aa)) are disordered. Composition is skewed to low complexity over residues 85–113 (SVTS…SSSS) and 121–164 (SLSS…SSES).

In Mus musculus (Mouse), this protein is Zinc finger CCHC domain-containing protein 10 (Zcchc10).